The following is a 320-amino-acid chain: Agamous-like MADS-box protein AGL90 (320 aa).

Residues 1–59 (MKKVKLSLIANERSRKTSFMKRKNGIFKKLHELSTLCGVQACALIYSPFIPVPESWPSR) form the MADS-box domain. Positions 80 to 115 (KMMDQETHLMERITKAKEQLKNLAAENRELQVRRFM) form a coiled coil.

As to quaternary structure, interacts with AGL62.

The protein resides in the nucleus. In terms of biological role, probable transcription factor. This Arabidopsis thaliana (Mouse-ear cress) protein is Agamous-like MADS-box protein AGL90 (AGL90).